Here is an 83-residue protein sequence, read N- to C-terminus: Polcalcin Bra r 2 (83 aa).

EF-hand domains are found at residues Thr5 to Val40 and Asp43 to Leu75. Ca(2+) contacts are provided by Asp18, Asn20, Asp22, Lys24, Glu29, Asp53, Asp55, Asp57, Tyr59, and Glu64.

The chain is Polcalcin Bra r 2 from Brassica campestris (Field mustard).